We begin with the raw amino-acid sequence, 282 residues long: Protein DOG1-like 3 (282 aa).

The DOG1 domain occupies 11–254 (EQLQKGCYYE…HEWGRVREEQ (244 aa)).

The polypeptide is Protein DOG1-like 3 (Arabidopsis thaliana (Mouse-ear cress)).